The chain runs to 420 residues: ATP phosphoribosyltransferase regulatory subunit (420 aa).

Belongs to the class-II aminoacyl-tRNA synthetase family. HisZ subfamily. In terms of assembly, heteromultimer composed of HisG and HisZ subunits.

Its subcellular location is the cytoplasm. The protein operates within amino-acid biosynthesis; L-histidine biosynthesis; L-histidine from 5-phospho-alpha-D-ribose 1-diphosphate: step 1/9. Its function is as follows. Required for the first step of histidine biosynthesis. May allow the feedback regulation of ATP phosphoribosyltransferase activity by histidine. This is ATP phosphoribosyltransferase regulatory subunit from Synechococcus sp. (strain ATCC 27144 / PCC 6301 / SAUG 1402/1) (Anacystis nidulans).